The chain runs to 367 residues: MYVFKALAGIVLALVATLAHAERIRDLTSVQGVRENSLIGYGLVVGLDGTGDQTTQTPFTTQTLNNMLSQLGITVPTGTNMQLKNVAAVMVTASYPPFARQGQTIDVVVSSMGNAKSLRGGTLLMTPLKGVDSQVYALAQGNILVGGAGASAGGSSVQVNQLNGGRITNGAIIERELPSQFGAGNTINLQLNDEDFTMAQQITDAINRARGYGSATALDARTVQVRVPSGNSSQVRFLADIQNMEVNVTPQDAKVVINSRTGSVVMNREVTLDSCAVAQGNLSVTVNRQLNVNQPNTPFGGGQTVVTPQTQIDLRQSGGSLQSVRSSANLNSVVRALNALGATPMDLMSILQSMQSAGCLRAKLEII.

The signal sequence occupies residues 1–21 (MYVFKALAGIVLALVATLAHA).

It belongs to the FlgI family. As to quaternary structure, the basal body constitutes a major portion of the flagellar organelle and consists of four rings (L,P,S, and M) mounted on a central rod.

The protein localises to the periplasm. It localises to the bacterial flagellum basal body. In terms of biological role, assembles around the rod to form the L-ring and probably protects the motor/basal body from shearing forces during rotation. This is Flagellar P-ring protein from Salmonella arizonae (strain ATCC BAA-731 / CDC346-86 / RSK2980).